We begin with the raw amino-acid sequence, 473 residues long: Phosphoglucosamine mutase (473 aa).

Residue S102 is the Phosphoserine intermediate of the active site. S102, D248, D250, and D252 together coordinate Mg(2+). S102 carries the post-translational modification Phosphoserine.

Belongs to the phosphohexose mutase family. Requires Mg(2+) as cofactor. Post-translationally, activated by phosphorylation.

The catalysed reaction is alpha-D-glucosamine 1-phosphate = D-glucosamine 6-phosphate. Functionally, catalyzes the conversion of glucosamine-6-phosphate to glucosamine-1-phosphate. The polypeptide is Phosphoglucosamine mutase (Rhodospirillum centenum (strain ATCC 51521 / SW)).